Consider the following 102-residue polypeptide: Small ribosomal subunit protein uS10 (102 aa).

It belongs to the universal ribosomal protein uS10 family. Part of the 30S ribosomal subunit.

Involved in the binding of tRNA to the ribosomes. This is Small ribosomal subunit protein uS10 from Staphylococcus saprophyticus subsp. saprophyticus (strain ATCC 15305 / DSM 20229 / NCIMB 8711 / NCTC 7292 / S-41).